Consider the following 65-residue polypeptide: DNA-binding protein 7e (65 aa).

K7 bears the N6-methyllysine mark. N6-methyllysine; partial occurs at positions 63 and 64.

Belongs to the 7 kDa DNA-binding/endoribonuclease P2 family. In terms of assembly, monomer. Post-translationally, lys-63 was found to be 25% monomethylated and Lys-64 was found to be 36% monomethylated.

Its subcellular location is the cytoplasm. In terms of biological role, can constrain negative DNA supercoils. May be involved in maintaining the integrity of the genome at high temperature. This Sulfolobus acidocaldarius (strain ATCC 33909 / DSM 639 / JCM 8929 / NBRC 15157 / NCIMB 11770) protein is DNA-binding protein 7e.